We begin with the raw amino-acid sequence, 260 residues long: uncharacterized protein (260 aa).

Transmembrane regions (helical) follow at residues 39-59, 68-88, 111-131, 159-179, 193-213, and 214-234; these read IFYLLFIPLSKNFIYTDLIEA, IIVGIYLSYPIFLYQIWSFLI, FLGSCIGYYLLFPIAFTFFLG, LIFSLSICFQLPVLILFLFKI, FIYLFFFILAAILSPPDILSQ, and FILVIPLILFFEISLFCIKLI.

Belongs to the TatC family.

The protein localises to the mitochondrion membrane. This is an uncharacterized protein from Reclinomonas americana.